Consider the following 124-residue polypeptide: Large ribosomal subunit protein bL20 (124 aa).

Belongs to the bacterial ribosomal protein bL20 family.

Its function is as follows. Binds directly to 23S ribosomal RNA and is necessary for the in vitro assembly process of the 50S ribosomal subunit. It is not involved in the protein synthesizing functions of that subunit. The protein is Large ribosomal subunit protein bL20 of Ehrlichia canis (strain Jake).